The chain runs to 419 residues: Zinc finger protein Pegasus (419 aa).

A Glycyl lysine isopeptide (Lys-Gly) (interchain with G-Cter in SUMO2) cross-link involves residue lysine 5. The disordered stretch occupies residues 36-55 (DKEAETLQGAGTDGDQNGLD). 3 consecutive C2H2-type zinc fingers follow at residues 82 to 104 (LKCR…IRIH), 110 to 132 (HRCH…MRSH), and 138 to 161 (YKCE…RRKH). Lysine 185 is covalently cross-linked (Glycyl lysine isopeptide (Lys-Gly) (interchain with G-Cter in SUMO2)). Positions 262-273 (LSSLPPENQNPA) are enriched in polar residues. Disordered regions lie at residues 262–284 (LSSL…PDEK) and 297–356 (VSAV…PTLP). The span at 297–311 (VSAVSASIPQSSSPT) shows a compositional bias: low complexity. Polar residues predominate over residues 332 to 349 (SEPSAHTSTPSIGNSQPS). 2 consecutive C2H2-type zinc fingers follow at residues 364-386 (HHCQ…MGCH) and 392-416 (FQCN…RGQH).

It belongs to the Ikaros C2H2-type zinc-finger protein family. Self-associates. Interacts with other family members; IKZF1, IKZF2, IKZF3 and IKZF4.

It localises to the nucleus. Its function is as follows. Transcriptional repressor that binds the core 5'GNNTGTNG-3' DNA consensus sequence. Involved in megakaryocyte differentiation. This is Zinc finger protein Pegasus (Ikzf5) from Mus musculus (Mouse).